The chain runs to 388 residues: tRNA (guanine(26)-N(2))-dimethyltransferase (388 aa).

The Trm1 methyltransferase domain maps to 4–383 (RTIVEGTTKI…APIAEIKKII (380 aa)). Residues R41, R78, D94, and A123 each coordinate S-adenosyl-L-methionine. Residues C251, C254, C271, and C274 each contribute to the Zn(2+) site.

It belongs to the class I-like SAM-binding methyltransferase superfamily. Trm1 family.

The enzyme catalyses guanosine(26) in tRNA + 2 S-adenosyl-L-methionine = N(2)-dimethylguanosine(26) in tRNA + 2 S-adenosyl-L-homocysteine + 2 H(+). Functionally, dimethylates a single guanine residue at position 26 of a number of tRNAs using S-adenosyl-L-methionine as donor of the methyl groups. This is tRNA (guanine(26)-N(2))-dimethyltransferase from Methanosarcina acetivorans (strain ATCC 35395 / DSM 2834 / JCM 12185 / C2A).